The chain runs to 143 residues: Large ribosomal subunit protein uL11 (143 aa).

The protein belongs to the universal ribosomal protein uL11 family. Part of the ribosomal stalk of the 50S ribosomal subunit. Interacts with L10 and the large rRNA to form the base of the stalk. L10 forms an elongated spine to which L12 dimers bind in a sequential fashion forming a multimeric L10(L12)X complex. Post-translationally, one or more lysine residues are methylated.

Forms part of the ribosomal stalk which helps the ribosome interact with GTP-bound translation factors. The polypeptide is Large ribosomal subunit protein uL11 (Thioalkalivibrio sulfidiphilus (strain HL-EbGR7)).